The primary structure comprises 155 residues: 6,7-dimethyl-8-ribityllumazine synthase (155 aa).

5-amino-6-(D-ribitylamino)uracil-binding positions include Phe26, 60–62 (ALE), and 84–86 (AVI). 89-90 (ET) contributes to the (2S)-2-hydroxy-3-oxobutyl phosphate binding site. His92 (proton donor) is an active-site residue. Asn117 contacts 5-amino-6-(D-ribitylamino)uracil. Arg131 is a binding site for (2S)-2-hydroxy-3-oxobutyl phosphate.

The protein belongs to the DMRL synthase family.

The catalysed reaction is (2S)-2-hydroxy-3-oxobutyl phosphate + 5-amino-6-(D-ribitylamino)uracil = 6,7-dimethyl-8-(1-D-ribityl)lumazine + phosphate + 2 H2O + H(+). The protein operates within cofactor biosynthesis; riboflavin biosynthesis; riboflavin from 2-hydroxy-3-oxobutyl phosphate and 5-amino-6-(D-ribitylamino)uracil: step 1/2. Functionally, catalyzes the formation of 6,7-dimethyl-8-ribityllumazine by condensation of 5-amino-6-(D-ribitylamino)uracil with 3,4-dihydroxy-2-butanone 4-phosphate. This is the penultimate step in the biosynthesis of riboflavin. The polypeptide is 6,7-dimethyl-8-ribityllumazine synthase (Chromobacterium violaceum (strain ATCC 12472 / DSM 30191 / JCM 1249 / CCUG 213 / NBRC 12614 / NCIMB 9131 / NCTC 9757 / MK)).